The primary structure comprises 147 residues: Small ribosomal subunit protein uS12 (147 aa).

It belongs to the universal ribosomal protein uS12 family. Part of the 30S ribosomal subunit.

With S4 and S5 plays an important role in translational accuracy. Located at the interface of the 30S and 50S subunits. In Staphylothermus marinus (strain ATCC 43588 / DSM 3639 / JCM 9404 / F1), this protein is Small ribosomal subunit protein uS12.